The sequence spans 87 residues: Omega-lycotoxin-Am1g (87 aa).

The first 17 residues, 1–17 (MKLSIFFVLFFIAIAYC), serve as a signal peptide directing secretion. A propeptide spanning residues 18–40 (QPEFLDDEEDEVEETLPVAEEGR) is cleaved from the precursor. 4 disulfides stabilise this stretch: C44–C59, C51–C64, C58–C84, and C66–C82.

The protein belongs to the neurotoxin omega-lctx family. As to expression, expressed by the venom gland.

It is found in the secreted. Functionally, modulates Cav2.1/CACNA1A voltage-gated calcium channels (P/Q-type currents) in rat cerebellar Purkinje cells and hippocampal CA1-CA3 neurons. At saturating concentrations (&gt;10 nM) decelerates activation kinetics and slightly increases peak amplitude without affecting deactivation kinetics. In vivo, does not cause death when intravenously injected into mice. In rat models, through its activity on Cav2.1/CACNA1A, has an ameliorative effect on memory defects provoked by hyperstimulation of N-methyl-D-aspartate receptors (NMDARs) in the hippocampus. In Alopecosa marikovskyi (Wolf spider), this protein is Omega-lycotoxin-Am1g.